We begin with the raw amino-acid sequence, 397 residues long: Ubiquitin-like modifier-activating enzyme 5 (397 aa).

5 residues coordinate ATP: Gly-77, Asp-98, Lys-121, Asn-144, and Asn-178. Residues Cys-220 and Cys-223 each coordinate Zn(2+). Cys-244 functions as the Glycyl thioester intermediate in the catalytic mechanism. Cys-297 and Cys-302 together coordinate Zn(2+). The UFM1-interacting sequence (UIS) motif lies at 329–341 (VVHEDNDWGIELV). Residues 342 to 372 (SEVSEEELKAASGPVPDLPEGIKVAYTIPIT) form a linker region. The UFC1-binding sequence (UFC) signature appears at 382 to 397 (DSEQSLDELMAQMKNL).

Belongs to the ubiquitin-activating E1 family. UBA5 subfamily. Homodimer; homodimerization is required for ufm1 activation. Interacts (via UIS motif) with ufm1; binds ufm1 via a trans-binding mechanism in which ufm1 interacts with distinct sites in both subunits of the uba5 homodimer. Interacts (via C-terminus) with ufc1.

The protein localises to the cytoplasm. Its subcellular location is the nucleus. The protein resides in the endoplasmic reticulum membrane. It is found in the golgi apparatus. Its function is as follows. E1-like enzyme which specifically catalyzes the first step in ufmylation. Activates ufm1 by first adenylating its C-terminal glycine residue with ATP, and thereafter linking this residue to the side chain of a cysteine residue in E1, yielding a ufm1-E1 thioester and free AMP. Activates ufm1 via a trans-binding mechanism, in which ufm1 interacts with distinct sites in both subunits of the uba5 homodimer. Trans-binding also promotes stabilization of the uba5 homodimer, and enhances ATP-binding. Transfer of ufm1 from uba5 to the E2-like enzyme UFC1 also takes place using a trans mechanism. Ufmylation plays a key role in various processes, such as ribosome recycling, response to DNA damage, interferon response or reticulophagy (also called ER-phagy). The protein is Ubiquitin-like modifier-activating enzyme 5 of Xenopus laevis (African clawed frog).